A 375-amino-acid polypeptide reads, in one-letter code: Succinyl-diaminopimelate desuccinylase (375 aa).

Zn(2+) is bound at residue His66. Asp68 is an active-site residue. Zn(2+) is bound at residue Asp99. Glu133 acts as the Proton acceptor in catalysis. 3 residues coordinate Zn(2+): Glu134, Glu162, and His348.

Belongs to the peptidase M20A family. DapE subfamily. Homodimer. Zn(2+) is required as a cofactor. Requires Co(2+) as cofactor.

It catalyses the reaction N-succinyl-(2S,6S)-2,6-diaminopimelate + H2O = (2S,6S)-2,6-diaminopimelate + succinate. It participates in amino-acid biosynthesis; L-lysine biosynthesis via DAP pathway; LL-2,6-diaminopimelate from (S)-tetrahydrodipicolinate (succinylase route): step 3/3. Its function is as follows. Catalyzes the hydrolysis of N-succinyl-L,L-diaminopimelic acid (SDAP), forming succinate and LL-2,6-diaminopimelate (DAP), an intermediate involved in the bacterial biosynthesis of lysine and meso-diaminopimelic acid, an essential component of bacterial cell walls. This Buchnera aphidicola subsp. Acyrthosiphon pisum (strain APS) (Acyrthosiphon pisum symbiotic bacterium) protein is Succinyl-diaminopimelate desuccinylase.